A 205-amino-acid chain; its full sequence is Holliday junction branch migration complex subunit RuvA (205 aa).

A domain I region spans residues 1–64; that stretch reads MIGKLKGVVD…EDMIRLYGFR (64 aa). The segment at 65-143 is domain II; sequence SDAEREWFRL…AFAPVDPALV (79 aa). Positions 144–152 are flexible linker; it reads ALAGAVEEG. A domain III region spans residues 153-205; that stretch reads AAPQPVADAVSALVNLGYPQVQAAAAIAAALKGAGEGAEAKVLIRLGLRELAR.

The protein belongs to the RuvA family. In terms of assembly, homotetramer. Forms an RuvA(8)-RuvB(12)-Holliday junction (HJ) complex. HJ DNA is sandwiched between 2 RuvA tetramers; dsDNA enters through RuvA and exits via RuvB. An RuvB hexamer assembles on each DNA strand where it exits the tetramer. Each RuvB hexamer is contacted by two RuvA subunits (via domain III) on 2 adjacent RuvB subunits; this complex drives branch migration. In the full resolvosome a probable DNA-RuvA(4)-RuvB(12)-RuvC(2) complex forms which resolves the HJ.

Its subcellular location is the cytoplasm. In terms of biological role, the RuvA-RuvB-RuvC complex processes Holliday junction (HJ) DNA during genetic recombination and DNA repair, while the RuvA-RuvB complex plays an important role in the rescue of blocked DNA replication forks via replication fork reversal (RFR). RuvA specifically binds to HJ cruciform DNA, conferring on it an open structure. The RuvB hexamer acts as an ATP-dependent pump, pulling dsDNA into and through the RuvAB complex. HJ branch migration allows RuvC to scan DNA until it finds its consensus sequence, where it cleaves and resolves the cruciform DNA. This chain is Holliday junction branch migration complex subunit RuvA, found in Methylobacterium radiotolerans (strain ATCC 27329 / DSM 1819 / JCM 2831 / NBRC 15690 / NCIMB 10815 / 0-1).